The following is a 261-amino-acid chain: Cytochrome c oxidase subunit 3 (261 aa).

Topologically, residues 1-15 (MTHQTHAYHMVNPSP) are mitochondrial matrix. Residues 16 to 34 (WPLTGALSALLMTSGLTMW) traverse the membrane as a helical segment. Over 35 to 40 (FHFNSM) the chain is Mitochondrial intermembrane. A helical transmembrane segment spans residues 41–66 (TLLMIGLTTNMLTMYQWWRDVIREST). Over 67–72 (FQGHHT) the chain is Mitochondrial matrix. A helical transmembrane segment spans residues 73 to 105 (PAVQKGLRYGMILFIISEVLFFTGFFWAFYHSS). At 106–128 (LAPTPELGGCWPPTGIHPLNPLE) the chain is on the mitochondrial intermembrane side. A helical membrane pass occupies residues 129 to 152 (VPLLNTSVLLASGVSITWAHHSLM). Over 153 to 155 (EGD) the chain is Mitochondrial matrix. Residues 156–183 (RKHMLQALFITITLGVYFTLLQASEYYE) form a helical membrane-spanning segment. Topologically, residues 184 to 190 (APFTISD) are mitochondrial intermembrane. A helical membrane pass occupies residues 191–223 (GVYGSTFFVATGFHGLHVIIGSTFLIVCFFRQL). Topologically, residues 224 to 232 (KFHFTSNHH) are mitochondrial matrix. Residues 233–256 (FGFEAAAWYWHFVDVVWLFLYVSI) traverse the membrane as a helical segment. The Mitochondrial intermembrane portion of the chain corresponds to 257-261 (YWWGS).

It belongs to the cytochrome c oxidase subunit 3 family. As to quaternary structure, component of the cytochrome c oxidase (complex IV, CIV), a multisubunit enzyme composed of 14 subunits. The complex is composed of a catalytic core of 3 subunits MT-CO1, MT-CO2 and MT-CO3, encoded in the mitochondrial DNA, and 11 supernumerary subunits COX4I1 (or COX4I2), COX5A, COX5B, COX6A2 (or COX6A1), COX6B1 (or COX6B2), COX6C, COX7A1 (or COX7A2), COX7B, COX7C, COX8B and NDUFA4, which are encoded in the nuclear genome. The complex exists as a monomer or a dimer and forms supercomplexes (SCs) in the inner mitochondrial membrane with NADH-ubiquinone oxidoreductase (complex I, CI) and ubiquinol-cytochrome c oxidoreductase (cytochrome b-c1 complex, complex III, CIII), resulting in different assemblies (supercomplex SCI(1)III(2)IV(1) and megacomplex MCI(2)III(2)IV(2)).

The protein resides in the mitochondrion inner membrane. The catalysed reaction is 4 Fe(II)-[cytochrome c] + O2 + 8 H(+)(in) = 4 Fe(III)-[cytochrome c] + 2 H2O + 4 H(+)(out). Component of the cytochrome c oxidase, the last enzyme in the mitochondrial electron transport chain which drives oxidative phosphorylation. The respiratory chain contains 3 multisubunit complexes succinate dehydrogenase (complex II, CII), ubiquinol-cytochrome c oxidoreductase (cytochrome b-c1 complex, complex III, CIII) and cytochrome c oxidase (complex IV, CIV), that cooperate to transfer electrons derived from NADH and succinate to molecular oxygen, creating an electrochemical gradient over the inner membrane that drives transmembrane transport and the ATP synthase. Cytochrome c oxidase is the component of the respiratory chain that catalyzes the reduction of oxygen to water. Electrons originating from reduced cytochrome c in the intermembrane space (IMS) are transferred via the dinuclear copper A center (CU(A)) of subunit 2 and heme A of subunit 1 to the active site in subunit 1, a binuclear center (BNC) formed by heme A3 and copper B (CU(B)). The BNC reduces molecular oxygen to 2 water molecules using 4 electrons from cytochrome c in the IMS and 4 protons from the mitochondrial matrix. In Bos taurus (Bovine), this protein is Cytochrome c oxidase subunit 3 (MT-CO3).